Here is a 209-residue protein sequence, read N- to C-terminus: Uracil phosphoribosyltransferase (209 aa).

5-phospho-alpha-D-ribose 1-diphosphate-binding positions include Arg79, Arg104, and 131–139 (DPMLATGGS). Residues Ile194 and 199–201 (GDA) each bind uracil. Asp200 contributes to the 5-phospho-alpha-D-ribose 1-diphosphate binding site.

The protein belongs to the UPRTase family. Requires Mg(2+) as cofactor.

The catalysed reaction is UMP + diphosphate = 5-phospho-alpha-D-ribose 1-diphosphate + uracil. The protein operates within pyrimidine metabolism; UMP biosynthesis via salvage pathway; UMP from uracil: step 1/1. Its activity is regulated as follows. Allosterically activated by GTP. Functionally, catalyzes the conversion of uracil and 5-phospho-alpha-D-ribose 1-diphosphate (PRPP) to UMP and diphosphate. The protein is Uracil phosphoribosyltransferase of Lactobacillus gasseri (strain ATCC 33323 / DSM 20243 / BCRC 14619 / CIP 102991 / JCM 1131 / KCTC 3163 / NCIMB 11718 / NCTC 13722 / AM63).